We begin with the raw amino-acid sequence, 506 residues long: MSFPVEVLAGIAIELQRGIGHQDRFQRLITTLRQVLACDASALLRYESRQFIPLAIDGLAQDVLGRRFTLEGHPRLEAIARAGDVVRFPADSDLPDPYDGLIPGQESLKVHACVGLPLFAGQNLIGALTLDAMTPEQFEVFSDEELRLVAALAAGALSNALLIEQLESQNMLPGSSGVFEPIKETHMIGLSPAMTQLKKEIEIVAGSDLNVLIGGETGTGKELVAKAIHQGSPRAVNPLVYLNCAALPESVAESELFGHVKGAFTGAISNRSGKFEMADNGTLFLDEIGELSLALQAKLLRVLQYGDIQRVGDDRSLRVDVRVLAATNRDLREEVLAGRFRADLFHRLSVFPLFVPPLRERGDDVVLLAGYFCEQCRLRLGLSRVVLSPGARRHLLNYGWPGNVRELEHAIHRAVVLARATRAGDEVVLEEQHFALSEDVLPAPSAESFLALPACRNLRESTENFQREMIRQALAQNNHNWAASARALETDVANLHRLAKRLGLKD.

The residue at position 57 (D57) is a 4-aspartylphosphate. One can recognise a Sigma-54 factor interaction domain in the interval 187–416 (MIGLSPAMTQ…LEHAIHRAVV (230 aa)). ATP-binding positions include 215–222 (GETGTGKE) and 278–287 (ADNGTLFLDE). Residues 481-500 (WAASARALETDVANLHRLAK) constitute a DNA-binding region (H-T-H motif).

It functions in the pathway nitrogen metabolism; nitric oxide reduction. Functionally, required for the expression of anaerobic nitric oxide (NO) reductase, acts as a transcriptional activator for at least the norVW operon. Activation also requires sigma-54. The polypeptide is Anaerobic nitric oxide reductase transcription regulator NorR (Salmonella paratyphi A (strain ATCC 9150 / SARB42)).